We begin with the raw amino-acid sequence, 560 residues long: DNA ligase B (560 aa).

Residue Lys124 is the N6-AMP-lysine intermediate of the active site.

This sequence belongs to the NAD-dependent DNA ligase family. LigB subfamily.

It catalyses the reaction NAD(+) + (deoxyribonucleotide)n-3'-hydroxyl + 5'-phospho-(deoxyribonucleotide)m = (deoxyribonucleotide)n+m + AMP + beta-nicotinamide D-nucleotide.. Catalyzes the formation of phosphodiester linkages between 5'-phosphoryl and 3'-hydroxyl groups in double-stranded DNA using NAD as a coenzyme and as the energy source for the reaction. The protein is DNA ligase B of Shigella sonnei (strain Ss046).